We begin with the raw amino-acid sequence, 23 residues long: Prolamin alpha-3 (23 aa).

The chain is Prolamin alpha-3 from Dactylis glomerata (Orchard grass).